We begin with the raw amino-acid sequence, 440 residues long: MKERILQEIKTRVNRKSWELWFSSFDVRSIEGNKVVFSVGNLFIKEWLEKKYHSVLSKAVKVVLGNDATFEITYEAFEPHSSYSEPLVKKRAVLLTPLNPDYTFENFVVGPGNSFAYHAALEVAKHPGRYNPLFIYGGVGLGKTHLLQSIGNYVVQNEPDLRVMYITSEKFLNDLVDSMKEGKLNEFREKYRKKVDILLIDDVQFLIGKTGVQTELFHTFNELHDSGKQIVICSDREPQKLSEFQDRLVSRFQMGLVAKLEPPDEETRKSIAKKMLEIEHGELPEEVLNFVAENVDDNLRRLRGAIIKLLVYKETTGKEVDLREAILLLKDFIKPNRVKAMDPIDELIEIVAKVTGVSREEILSNNRNVKALTARRIGMYVAKNHLNSSLRTIAEKFNRSHPVVLDSVKRVKDSLLKGNKQLKSLIDEVIGEISKRALSG.

Positions 1–69 (MKERILQEIK…VKVVLGNDAT (69 aa)) are domain I, interacts with DnaA modulators. The domain II stretch occupies residues 69–96 (TFEITYEAFEPHSSYSEPLVKKRAVLLT). A domain III, AAA+ region region spans residues 97 to 313 (PLNPDYTFEN…GAIIKLLVYK (217 aa)). ATP-binding residues include Gly140, Gly142, Lys143, and Thr144. Residues 314–440 (ETTGKEVDLR…GEISKRALSG (127 aa)) form a domain IV, binds dsDNA region.

This sequence belongs to the DnaA family. In terms of assembly, oligomerizes as a right-handed, spiral filament on DNA at oriC.

Its subcellular location is the cytoplasm. In terms of biological role, plays an essential role in the initiation and regulation of chromosomal replication. ATP-DnaA binds to the origin of replication (oriC) to initiate formation of the DNA replication initiation complex once per cell cycle. Binds the DnaA box (a 9 base pair repeat at the origin) and separates the double-stranded (ds)DNA. Forms a right-handed helical filament on oriC DNA; dsDNA binds to the exterior of the filament while single-stranded (ss)DNA is stabiized in the filament's interior. The ATP-DnaA-oriC complex binds and stabilizes one strand of the AT-rich DNA unwinding element (DUE), permitting loading of DNA polymerase. After initiation quickly degrades to an ADP-DnaA complex that is not apt for DNA replication. Binds acidic phospholipids. The sequence is that of Chromosomal replication initiator protein DnaA from Thermotoga petrophila (strain ATCC BAA-488 / DSM 13995 / JCM 10881 / RKU-1).